We begin with the raw amino-acid sequence, 415 residues long: Mulatexin (415 aa).

An N-terminal signal peptide occupies residues 1–21 (MKFRTLLIIFSLVFLLEIVSA). The Chitin-binding type-1 1 domain maps to 23 to 66 (EPQCGRDAGGALCHGNLCCSHWGFCGTTAIYCDVDQGCQSQCWS). Intrachain disulfides connect Cys-26–Cys-41, Cys-35–Cys-47, Cys-40–Cys-54, and Cys-60–Cys-64. A disordered region spans residues 65-127 (WSSPPPPSPP…PGGPERPDHR (63 aa)). The segment covering 67–121 (SPPPPSPPPPPPSPPPPSPPPPSPPPPSPPPPSPPPPSPPPPSPPPPSPPPPGGP) has biased composition (pro residues). One can recognise a Chitin-binding type-1 2 domain in the interval 125-167 (DHRCGRALGNPPCNPGRCCSIHNWCGSTAAYCRGSSCQYQCWN). Intrachain disulfides connect Cys-128–Cys-143, Cys-137–Cys-149, Cys-142–Cys-156, and Cys-161–Cys-165. Asn-264 is a glycosylation site (N-linked (GlcNAc...) asparagine).

In terms of processing, glycosylated.

It localises to the secreted. Functionally, chitin-binding protein which slows larval growth when consumed by the lepidopteran species S.ricini and M.brassica, but not when consumed by the mulberry specialist B.mori. Lacks chitinase activity. In Morus alba (White mulberry), this protein is Mulatexin.